The following is a 497-amino-acid chain: Cytochrome P450 71A18 (497 aa).

A helical membrane pass occupies residues 4-24; it reads TLMVSLCLTTLLTLLLLKKFL. Cys439 provides a ligand contact to heme.

The protein belongs to the cytochrome P450 family. Requires heme as cofactor.

The protein localises to the membrane. The sequence is that of Cytochrome P450 71A18 (CYP71A18) from Arabidopsis thaliana (Mouse-ear cress).